The chain runs to 308 residues: Methionyl-tRNA formyltransferase (308 aa).

109–112 (SLLP) lines the (6S)-5,6,7,8-tetrahydrofolate pocket.

It belongs to the Fmt family.

The enzyme catalyses L-methionyl-tRNA(fMet) + (6R)-10-formyltetrahydrofolate = N-formyl-L-methionyl-tRNA(fMet) + (6S)-5,6,7,8-tetrahydrofolate + H(+). In terms of biological role, attaches a formyl group to the free amino group of methionyl-tRNA(fMet). The formyl group appears to play a dual role in the initiator identity of N-formylmethionyl-tRNA by promoting its recognition by IF2 and preventing the misappropriation of this tRNA by the elongation apparatus. In Methylobacillus flagellatus (strain ATCC 51484 / DSM 6875 / VKM B-1610 / KT), this protein is Methionyl-tRNA formyltransferase.